Here is a 507-residue protein sequence, read N- to C-terminus: uncharacterized protein (507 aa).

12 consecutive transmembrane segments (helical) span residues 46–66 (WIVL…WIGY), 83–103 (AWLS…AMWA), 112–132 (AVLI…ISSL), 141–161 (FPIC…IMFL), 181–201 (IGVM…PAIV), 207–227 (VIWL…IATF), 263–283 (IILL…YTVM), 299–319 (VCAA…SIFV), 328–348 (TLKI…QLTL), 354–374 (VILG…YPIG), 389–409 (TSTG…VFIM), and 442–462 (MSIM…VVLF). Positions 477 to 493 (ATADKAKELSNQNKDRI) are enriched in basic and acidic residues. The segment at 477 to 507 (ATADKAKELSNQNKDRITLQAESAVEPLQKK) is disordered.

It localises to the membrane. This is an uncharacterized protein from Caenorhabditis elegans.